The primary structure comprises 258 residues: Ubiquinone/menaquinone biosynthesis C-methyltransferase UbiE (258 aa).

Residues T81, D102, and 130 to 131 each bind S-adenosyl-L-methionine; that span reads NA.

The protein belongs to the class I-like SAM-binding methyltransferase superfamily. MenG/UbiE family.

The enzyme catalyses a 2-demethylmenaquinol + S-adenosyl-L-methionine = a menaquinol + S-adenosyl-L-homocysteine + H(+). It catalyses the reaction a 2-methoxy-6-(all-trans-polyprenyl)benzene-1,4-diol + S-adenosyl-L-methionine = a 5-methoxy-2-methyl-3-(all-trans-polyprenyl)benzene-1,4-diol + S-adenosyl-L-homocysteine + H(+). It participates in quinol/quinone metabolism; menaquinone biosynthesis; menaquinol from 1,4-dihydroxy-2-naphthoate: step 2/2. It functions in the pathway cofactor biosynthesis; ubiquinone biosynthesis. Its function is as follows. Methyltransferase required for the conversion of demethylmenaquinol (DMKH2) to menaquinol (MKH2) and the conversion of 2-polyprenyl-6-methoxy-1,4-benzoquinol (DDMQH2) to 2-polyprenyl-3-methyl-6-methoxy-1,4-benzoquinol (DMQH2). The sequence is that of Ubiquinone/menaquinone biosynthesis C-methyltransferase UbiE from Rhizobium meliloti (strain 1021) (Ensifer meliloti).